A 570-amino-acid polypeptide reads, in one-letter code: Urease subunit alpha (570 aa).

Residues 135–570 enclose the Urease domain; that stretch reads GGLDIHIHFN…ELPLAKRYSL (436 aa). Residues H140, H142, and K219 each coordinate Ni(2+). Position 219 is an N6-carboxylysine (K219). Residue H221 coordinates substrate. The Ni(2+) site is built by H248 and H274. The Proton donor role is filled by H322. Position 362 (D362) interacts with Ni(2+).

This sequence belongs to the metallo-dependent hydrolases superfamily. Urease alpha subunit family. As to quaternary structure, heterotrimer of UreA (gamma), UreB (beta) and UreC (alpha) subunits. Three heterotrimers associate to form the active enzyme. Requires Ni cation as cofactor. Carboxylation allows a single lysine to coordinate two nickel ions.

Its subcellular location is the cytoplasm. It catalyses the reaction urea + 2 H2O + H(+) = hydrogencarbonate + 2 NH4(+). Its pathway is nitrogen metabolism; urea degradation; CO(2) and NH(3) from urea (urease route): step 1/1. This is Urease subunit alpha from Haloquadratum walsbyi (strain DSM 16790 / HBSQ001).